The chain runs to 26 residues: Delta-hemolysin (26 aa).

The residue at position 1 (Met-1) is an N-formylmethionine.

This sequence belongs to the delta-lysin family.

It is found in the secreted. The protein resides in the host cell membrane. Its function is as follows. Lyses erythrocytes and many other mammalian cells. In Staphylococcus aureus (strain MSSA476), this protein is Delta-hemolysin (hld).